We begin with the raw amino-acid sequence, 212 residues long: uncharacterized protein (212 aa).

The S-adenosyl-L-methionine site is built by glycine 53, glutamate 74, and aspartate 97.

This sequence belongs to the methyltransferase superfamily. YrrT family.

Functionally, could be a S-adenosyl-L-methionine-dependent methyltransferase. This is an uncharacterized protein from Bacillus thuringiensis (strain Al Hakam).